We begin with the raw amino-acid sequence, 1381 residues long: DNA-directed RNA polymerase subunit beta'' (1381 aa).

4 residues coordinate Zn(2+): cysteine 220, cysteine 293, cysteine 300, and cysteine 303.

It belongs to the RNA polymerase beta' chain family. RpoC2 subfamily. As to quaternary structure, in plastids the minimal PEP RNA polymerase catalytic core is composed of four subunits: alpha, beta, beta', and beta''. When a (nuclear-encoded) sigma factor is associated with the core the holoenzyme is formed, which can initiate transcription. Zn(2+) is required as a cofactor.

The protein localises to the plastid. It localises to the chloroplast. The enzyme catalyses RNA(n) + a ribonucleoside 5'-triphosphate = RNA(n+1) + diphosphate. DNA-dependent RNA polymerase catalyzes the transcription of DNA into RNA using the four ribonucleoside triphosphates as substrates. The protein is DNA-directed RNA polymerase subunit beta'' of Draba nemorosa (Woodland whitlowgrass).